We begin with the raw amino-acid sequence, 256 residues long: Floral homeotic protein APETALA 1 (256 aa).

In terms of domain architecture, MADS-box spans 1-61 (MGRGRVQLKR…GKLFEYSTDS (61 aa)). The region spanning 88–178 (NTNWSMEYNR…SKQIKEREKI (91 aa)) is the K-box domain. The stretch at 88-185 (NTNWSMEYNR…EKILRAQQEQ (98 aa)) forms a coiled coil.

As to quaternary structure, homodimer capable of binding to CArG-box sequences. Heterodimer with SEP3, AP1 and SVP. Binds AP3/PI to form a ternary complex. Interacts with the SEU-LUG corepressor complex when complexed to AGL24 or SVP. Interacts with AGL15 and AGL16. Interacts with TT16/AGL32. As to expression, expressed in young flower primordia, later becomes localized to sepals and petals.

The protein resides in the nucleus. Functionally, transcription factor that promotes early floral meristem identity in synergy with LEAFY. Is required subsequently for the transition of an inflorescence meristem into a floral meristem. Is indispensable for normal development of sepals and petals in flowers. Positively regulates the B class homeotic proteins APETALA3 and PISTILLATA with the cooperation of LEAFY and UFO. Interacts with SEPALLATA3 or AP3/PI heterodimer to form complexes that could be involved in genes regulation during floral meristem development. Positively regulates AGAMOUS in cooperation with LEAFY. Displays a redundant function with CAULIFLOWER in the up-regulation of LEAFY. Together with AGL24 and SVP, controls the identity of the floral meristem and regulates expression of class B, C and E genes. Represses flowering time genes AGL24, SVP and SOC1 in emerging floral meristems. This Arabidopsis thaliana (Mouse-ear cress) protein is Floral homeotic protein APETALA 1 (AP1).